The chain runs to 555 residues: Anaerobic magnesium-protoporphyrin IX monomethyl ester cyclase (555 aa).

Residues 9-143 (NYHSGGAEIA…TAVDQGRFMA (135 aa)) enclose the B12-binding domain. The region spanning 191 to 416 (PMNKRVAIPN…MKPDAMDRGE (226 aa)) is the Radical SAM core domain. Residues cysteine 205, cysteine 209, and cysteine 212 each coordinate [4Fe-4S] cluster.

It belongs to the BchE family. It depends on [4Fe-4S] cluster as a cofactor. Requires adenosylcob(III)alamin as cofactor.

The enzyme catalyses Mg-protoporphyrin IX 13-monomethyl ester + 3 S-adenosyl-L-methionine + H2O = 3,8-divinyl protochlorophyllide a + 3 5'-deoxyadenosine + 3 L-methionine + 4 H(+). It functions in the pathway porphyrin-containing compound metabolism; bacteriochlorophyll biosynthesis (light-independent). Functionally, involved in the tetrapyrrole biosynthetic pathways leading to chlorophyll and bacteriochlorophyll (BChl). Catalyzes the anaerobic formation of the isocyclic ring (E-ring) in Mg-protoporphyrin monomethyl ester (MPE) to yield protochlorophyllide a (PChlide a) via a six-electron oxidation and the formation of an oxo group at position C13 using oxygen from a water molecule. The chain is Anaerobic magnesium-protoporphyrin IX monomethyl ester cyclase (bchE) from Rubrivivax gelatinosus (Rhodocyclus gelatinosus).